Here is an 84-residue protein sequence, read N- to C-terminus: Dolichol phosphate-mannose biosynthesis regulatory protein (84 aa).

Helical transmembrane passes span Phe11 to Leu31 and Tyr49 to Ile69.

This sequence belongs to the DPM2 family. As to quaternary structure, component of the dolichol-phosphate mannose (DPM) synthase complex composed of DPM1, DPM2 and DPM3; in the complex interacts directly with DPM3. Component of the glycosylphosphatidylinositol-N-acetylglucosaminyltransferase (GPI-GnT) complex composed at least by PIGA, PIGC, PIGH, PIGP, PIGQ, PIGY and DPM2. Interacts with PIGA, PIGC and PIGQ.

The protein localises to the endoplasmic reticulum membrane. It functions in the pathway protein modification; protein glycosylation. Regulates the biosynthesis of dolichol phosphate-mannose. Regulatory subunit of the dolichol-phosphate mannose (DPM) synthase complex; essential for the ER localization and stable expression of DPM1. Part of the glycosylphosphatidylinositol-N-acetylglucosaminyltransferase (GPI-GnT) complex that catalyzes the transfer of N-acetylglucosamine from UDP-N-acetylglucosamine to phosphatidylinositol and participates in the first step of GPI biosynthesis. May act by regulating the GPI-GNT complex. The polypeptide is Dolichol phosphate-mannose biosynthesis regulatory protein (Mus musculus (Mouse)).